The chain runs to 350 residues: Pleckstrin (350 aa).

One can recognise a PH 1 domain in the interval 4-101 (KRIREGYLVK…WVRDIKKAIK (98 aa)). Residue Lys-64 is modified to N6-acetyllysine. Phosphoserine is present on residues Ser-113 and Ser-117. In terms of domain architecture, DEP spans 136–221 (PEKGIKELNL…SPDAFYYFPD (86 aa)). The PH 2 domain maps to 244 to 347 (VIIKQGCLLK…WIKAIQVASR (104 aa)).

In terms of biological role, major protein kinase C substrate of platelets. This chain is Pleckstrin (Plek), found in Mus musculus (Mouse).